Here is a 288-residue protein sequence, read N- to C-terminus: MYEGINLITAIITPFTVNDEIDYESLEKLIEHLLNHGSQGFVIAGTTGESPTLSFEEKVELTRFIAKQVGNRALLIANAGSNNTKESVEAAKALSKIEHINGILAVTPYYNKPSQAGMIAHFKAIADASEKPVMLYNIPGRTVVGLTVDSVIELAQHPNINAIKETTSTEFVEAEVEGATGFAVYTGEDAMTLSAYTVGGAGTISVASHLYGDEMSELFSAMNAGNWREAGRLQRYLTPRMNALFAYPSPTPVKTKLAEKGFVREAVRLPLIPLSDAEKLHLNELLEK.

A pyruvate-binding site is contributed by Thr-47. Catalysis depends on Tyr-136, which acts as the Proton donor/acceptor. Residue Lys-164 is the Schiff-base intermediate with substrate of the active site. Ile-204 provides a ligand contact to pyruvate.

It belongs to the DapA family. Homotetramer; dimer of dimers.

Its subcellular location is the cytoplasm. The enzyme catalyses L-aspartate 4-semialdehyde + pyruvate = (2S,4S)-4-hydroxy-2,3,4,5-tetrahydrodipicolinate + H2O + H(+). It participates in amino-acid biosynthesis; L-lysine biosynthesis via DAP pathway; (S)-tetrahydrodipicolinate from L-aspartate: step 3/4. In terms of biological role, catalyzes the condensation of (S)-aspartate-beta-semialdehyde [(S)-ASA] and pyruvate to 4-hydroxy-tetrahydrodipicolinate (HTPA). This chain is 4-hydroxy-tetrahydrodipicolinate synthase, found in Leuconostoc mesenteroides subsp. mesenteroides (strain ATCC 8293 / DSM 20343 / BCRC 11652 / CCM 1803 / JCM 6124 / NCDO 523 / NBRC 100496 / NCIMB 8023 / NCTC 12954 / NRRL B-1118 / 37Y).